A 256-amino-acid chain; its full sequence is GCN5-related N-acetyltransferase 10, chloroplastic (256 aa).

A chloroplast-targeting transit peptide spans 1 to 41; the sequence is MGHLPQSLYSAAGPKFPYPGSSGLGVDQRKLTWSRFPVFLR. Positions 106–256 constitute an N-acetyltransferase domain; it reads FMFFQAEVLS…RRVLMSKRFS (151 aa). Acetyl-CoA contacts are provided by residues 178-180, 186-191, 217-219, and Tyr-224; these read LAV, RKKMAS, and DAA. Residue Tyr-224 is the Proton donor of the active site.

This sequence belongs to the acetyltransferase family. GNAT subfamily. Oligomer. Post-translationally, autoacetylated. As to expression, expressed in green tissues.

The protein resides in the plastid. It localises to the chloroplast. The catalysed reaction is an N-terminal L-alpha-aminoacyl-[protein] + acetyl-CoA = N-terminal N(alpha)-acetyl-L-alpha-aminoacyl-[protein] + CoA + H(+). The enzyme catalyses L-lysyl-[protein] + acetyl-CoA = N(6)-acetyl-L-lysyl-[protein] + CoA + H(+). It catalyses the reaction N-terminal L-methionyl-[protein] + acetyl-CoA = N-terminal N(alpha)-acetyl-L-methionyl-[protein] + CoA + H(+). It carries out the reaction N-terminal L-seryl-[protein] + acetyl-CoA = N-terminal N(alpha)-acetyl-L-seryl-[protein] + CoA + H(+). The catalysed reaction is N-terminal L-valyl-[protein] + acetyl-CoA = N-terminal N(alpha)-acetyl-L-valyl-[protein] + CoA + H(+). The enzyme catalyses N-terminal L-threonyl-[protein] + acetyl-CoA = N-terminal N(alpha)-acetyl-L-threonyl-[protein] + CoA + H(+). It catalyses the reaction N-terminal L-alanyl-[protein] + acetyl-CoA = N-terminal N(alpha)-acetyl-L-alanyl-[protein] + CoA + H(+). It carries out the reaction N-terminal glycyl-[protein] + acetyl-CoA = N-terminal N(alpha)-acetylglycyl-[protein] + CoA + H(+). Functionally, protein acetyltransferase with dual specificity triggering both N-alpha-acetylation (NTA), with a preference for leucine, methionine, serine, valine and to a lower extent threonine and alanine as substrates (can also use glycine), and epsilon-lysine acetylation (KA) of several plastid proteins. This Arabidopsis thaliana (Mouse-ear cress) protein is GCN5-related N-acetyltransferase 10, chloroplastic.